The following is a 495-amino-acid chain: Cytochrome P450 2E1 (495 aa).

298–303 contacts substrate; that stretch reads FAGTET. Heme is bound at residue C437.

The protein belongs to the cytochrome P450 family. In terms of assembly, interacts with chaperones HSP70 and HSP90; this interaction is required for initial targeting to mitochondria. Requires heme as cofactor.

It is found in the endoplasmic reticulum membrane. The protein localises to the microsome membrane. It localises to the mitochondrion inner membrane. It catalyses the reaction an organic molecule + reduced [NADPH--hemoprotein reductase] + O2 = an alcohol + oxidized [NADPH--hemoprotein reductase] + H2O + H(+). The catalysed reaction is (5Z,8Z,11Z)-eicosatrienoate + reduced [NADPH--hemoprotein reductase] + O2 = 19-hydroxy-(5Z,8Z,11Z)-eicosatrienoate + oxidized [NADPH--hemoprotein reductase] + H2O + H(+). It carries out the reaction (5Z,8Z,11Z,14Z,17Z)-eicosapentaenoate + reduced [NADPH--hemoprotein reductase] + O2 = 19-hydroxy-(5Z,8Z,11Z,14Z,17Z)-eicosapentaenoate + oxidized [NADPH--hemoprotein reductase] + H2O + H(+). The enzyme catalyses (4Z,7Z,10Z,13Z,16Z,19Z)-docosahexaenoate + reduced [NADPH--hemoprotein reductase] + O2 = 21-hydroxy-(4Z,7Z,10Z,13Z,16Z,19Z)-docosahexaenoate + oxidized [NADPH--hemoprotein reductase] + H2O + H(+). It catalyses the reaction dodecanoate + reduced [NADPH--hemoprotein reductase] + O2 = 11-hydroxydodecanoate + oxidized [NADPH--hemoprotein reductase] + H2O + H(+). The catalysed reaction is tetradecanoate + reduced [NADPH--hemoprotein reductase] + O2 = 13-hydroxytetradecanoate + oxidized [NADPH--hemoprotein reductase] + H2O + H(+). It carries out the reaction 4-nitrophenol + NADPH + O2 + H(+) = 4-nitrocatechol + NADP(+) + H2O. It participates in lipid metabolism; fatty acid metabolism. With respect to regulation, the omega-1 hydroxylase activity is stimulated by cytochrome b5. In terms of biological role, a cytochrome P450 monooxygenase involved in the metabolism of fatty acids. Mechanistically, uses molecular oxygen inserting one oxygen atom into a substrate, and reducing the second into a water molecule, with two electrons provided by NADPH via cytochrome P450 reductase (NADPH--hemoprotein reductase). Catalyzes the hydroxylation of carbon-hydrogen bonds. Hydroxylates fatty acids specifically at the omega-1 position displaying the highest catalytic activity for saturated fatty acids. May be involved in the oxidative metabolism of xenobiotics. This Bos taurus (Bovine) protein is Cytochrome P450 2E1 (CYP2E1).